The following is a 202-amino-acid chain: Orotate phosphoribosyltransferase (202 aa).

5-phospho-alpha-D-ribose 1-diphosphate is bound by residues Arg-94, Lys-98, His-100, and 120–128 (EDLISTGGS). Ser-124 lines the orotate pocket.

It belongs to the purine/pyrimidine phosphoribosyltransferase family. PyrE subfamily. As to quaternary structure, homodimer. Requires Mg(2+) as cofactor.

It catalyses the reaction orotidine 5'-phosphate + diphosphate = orotate + 5-phospho-alpha-D-ribose 1-diphosphate. The protein operates within pyrimidine metabolism; UMP biosynthesis via de novo pathway; UMP from orotate: step 1/2. In terms of biological role, catalyzes the transfer of a ribosyl phosphate group from 5-phosphoribose 1-diphosphate to orotate, leading to the formation of orotidine monophosphate (OMP). The polypeptide is Orotate phosphoribosyltransferase (Staphylococcus haemolyticus (strain JCSC1435)).